The sequence spans 133 residues: Salivary cystatin-L (133 aa).

A signal peptide spans 1 to 19; that stretch reads MTSTFALVLLLGGMAVCVA. Residues 30 to 118 form the Cystatin domain; the sequence is ANHQANPEFL…RTCTTVVFEN (89 aa). Intrachain disulfides connect Cys89–Cys100 and Cys111–Cys130.

It belongs to the cystatin family. In terms of assembly, monomer. Can form homodimers in vitro, but probably not in vivo. Homodimers are predicted to be inactive; dimerization disrupts the interaction with target proteases. In terms of tissue distribution, detected in saliva (at protein level). Detected in salivary gland and midgut.

Its subcellular location is the secreted. In terms of biological role, contributes to the suppression of the host's immune response to tick salivary proteins and is important for successful feeding on hosts. Inhibitor of cysteine proteinases. Inhibits host papain and cathepsin L (CTSL) (in vitro). Inhibits host cathepsin S (CTSS) (in vitro). Inhibits host CTSV and CTSC, but to a lesser degree (in vitro). Inhibits host immune responses via its inhibition of host cathepsins. Inhibits differentiation of host dendritic cells. Inhibits proliferation of host T-cells in response to antigen stimulus. Down-regulates IL1B production by host mast cells, and this then leads to impaired activation of IL1R1, resulting in decreased IL9 production. Inhibits host inflammatory reactions and recruitment of host neutrophils. Attenuates IFN-beta (IFNB1)-triggered JAK/STAT signaling pathway in mouse dendritic cells. Its function is as follows. (Microbial infection) Down-regulates TLR2-mediated host responses to infection by Borrelia burgdorferi and the production of the chemokine CCL3 by host dendritic cells. Down-regulates host responses to infection by B.burgdorferi and the production of IFNB1 by host dendritic cells. This Ixodes scapularis (Black-legged tick) protein is Salivary cystatin-L.